Here is a 499-residue protein sequence, read N- to C-terminus: Putative DUF21 domain-containing protein At1g03270 (499 aa).

Residues 1 to 32 (MVVLSTLALVRAAYSLNSFVFEAEDIRFGSPW) lie on the Extracellular side of the membrane. A CNNM transmembrane domain is found at 29–211 (GSPWWFVVVG…GKGGELTHEE (183 aa)). A helical membrane pass occupies residues 33 to 53 (WFVVVGVACFLVLFAGIMSGL). Residues 54 to 91 (TLGLMSLGLVELEILQQSGSSAEKKQAAAILPVVKKQH) lie on the Cytoplasmic side of the membrane. Residues 92–112 (QLLVTLLLCNAAAMEALPICL) traverse the membrane as a helical segment. The Extracellular portion of the chain corresponds to 113–114 (DK). Residues 115-135 (IFHPFVAVLLSVTFVLAFGEI) traverse the membrane as a helical segment. The Cytoplasmic portion of the chain corresponds to 136 to 145 (IPQAICSRYG). Residues 146–166 (LAVGANFLWLVRILMIICYPI) traverse the membrane as a helical segment. Residues 167 to 499 (AYPIGKVLDA…TEPLLAESDR (333 aa)) are Extracellular-facing. The N-linked (GlcNAc...) asparagine glycan is linked to Asn-181. CBS domains follow at residues 230–291 (MTPI…EAPV), 295–359 (SIRK…SNLT), and 365–431 (HESH…IVDE). Asn-357, Asn-391, and Asn-484 each carry an N-linked (GlcNAc...) asparagine glycan.

It is found in the membrane. In Arabidopsis thaliana (Mouse-ear cress), this protein is Putative DUF21 domain-containing protein At1g03270 (CBSDUF4).